A 148-amino-acid chain; its full sequence is Arginine repressor (148 aa).

It belongs to the ArgR family.

Its subcellular location is the cytoplasm. Its pathway is amino-acid biosynthesis; L-arginine biosynthesis [regulation]. Regulates arginine biosynthesis genes. The protein is Arginine repressor of Chloroherpeton thalassium (strain ATCC 35110 / GB-78).